The primary structure comprises 256 residues: N-glycosylase/DNA lyase (256 aa).

3 residues coordinate 8-oxoguanine: glutamine 31, serine 58, and tryptophan 69. The segment at 125–184 (TLRQLSHIVGARREQKTLVFTIKILNYAYMCSRGVNRVLPFDIPIPVDYRVARLTWCAGL) is helix-hairpin-helix. Lysine 140 acts as the Schiff-base intermediate with DNA in catalysis. The 8-oxoguanine site is built by phenylalanine 144 and proline 170. Residue aspartate 172 is part of the active site. 8-oxoguanine is bound by residues aspartate 218 and tryptophan 222.

It belongs to the archaeal N-glycosylase/DNA lyase (AGOG) family.

It catalyses the reaction 2'-deoxyribonucleotide-(2'-deoxyribose 5'-phosphate)-2'-deoxyribonucleotide-DNA = a 3'-end 2'-deoxyribonucleotide-(2,3-dehydro-2,3-deoxyribose 5'-phosphate)-DNA + a 5'-end 5'-phospho-2'-deoxyribonucleoside-DNA + H(+). Its function is as follows. DNA repair enzyme that is part of the base excision repair (BER) pathway; protects from oxidative damage by removing the major product of DNA oxidation, 8-oxoguanine (GO), from single- and double-stranded DNA substrates. The chain is N-glycosylase/DNA lyase from Pyrobaculum aerophilum (strain ATCC 51768 / DSM 7523 / JCM 9630 / CIP 104966 / NBRC 100827 / IM2).